A 206-amino-acid polypeptide reads, in one-letter code: Uridine kinase (206 aa).

An ATP-binding site is contributed by Gly11–Thr18.

It belongs to the uridine kinase family.

The protein localises to the cytoplasm. It catalyses the reaction uridine + ATP = UMP + ADP + H(+). The catalysed reaction is cytidine + ATP = CMP + ADP + H(+). It functions in the pathway pyrimidine metabolism; CTP biosynthesis via salvage pathway; CTP from cytidine: step 1/3. The protein operates within pyrimidine metabolism; UMP biosynthesis via salvage pathway; UMP from uridine: step 1/1. This is Uridine kinase from Macrococcus caseolyticus (strain JCSC5402) (Macrococcoides caseolyticum).